The sequence spans 200 residues: NADH-quinone oxidoreductase subunit C (200 aa).

Belongs to the complex I 30 kDa subunit family. NDH-1 is composed of 14 different subunits. Subunits NuoB, C, D, E, F, and G constitute the peripheral sector of the complex.

The protein resides in the cell inner membrane. It carries out the reaction a quinone + NADH + 5 H(+)(in) = a quinol + NAD(+) + 4 H(+)(out). In terms of biological role, NDH-1 shuttles electrons from NADH, via FMN and iron-sulfur (Fe-S) centers, to quinones in the respiratory chain. The immediate electron acceptor for the enzyme in this species is believed to be ubiquinone. Couples the redox reaction to proton translocation (for every two electrons transferred, four hydrogen ions are translocated across the cytoplasmic membrane), and thus conserves the redox energy in a proton gradient. This chain is NADH-quinone oxidoreductase subunit C, found in Burkholderia multivorans (strain ATCC 17616 / 249).